A 253-amino-acid chain; its full sequence is MVSSFTSAPRSGFYYFAQGWKLVSQPGIRRFVILPLLVNILLMGGAFWWLFTQLDVWIPTLMSYVPDWLQWLSYLLWPLAVISVLLVFGYFFSTIANWIAAPFNGLLAEQLEARLTGATPPDTGIFGIMKDVPRIMKREWQKFAWYLPRAIVLLILYLIPGIGQTVAPVLWFLFSAWMLAIQYCDYPFDNHKVPFKEMRTALRTRKITNMQFGALTSLFTMIPLLNLFIMPVAVCGATAMWVDCYRDKHAMWR.

4 helical membrane-spanning segments follow: residues 31–51, 75–95, 151–171, and 222–242; these read FVIL…WWLF, LLWP…FSTI, IVLL…PVLW, and IPLL…AMWV.

This sequence belongs to the CysZ family.

It is found in the cell inner membrane. Functionally, high affinity, high specificity proton-dependent sulfate transporter, which mediates sulfate uptake. Provides the sulfur source for the cysteine synthesis pathway. In Escherichia coli (strain 55989 / EAEC), this protein is Sulfate transporter CysZ.